We begin with the raw amino-acid sequence, 625 residues long: Mitochondrial Rho GTPase 1 (625 aa).

At 1–601 (MSDDETLADV…LRRVFYLNDS (601 aa)) the chain is on the cytoplasmic side. Residues 3–170 (DDETLADVRI…EIFYYAQKAV (168 aa)) form the Miro 1 domain. Residues 16–23 (GDEGCGKT), 62–66 (DLSIK), and 123–126 (NKSD) contribute to the GTP site. EF-hand domains are found at residues 188–223 (RARK…CFGI) and 308–343 (EGVQ…CPVP). Residues Asp201, Asp203, Asp205, Tyr207, Glu212, Asp321, Asp323, Asp325, Cys327, and Glu332 each coordinate Ca(2+). The Miro 2 domain maps to 420 to 625 (HGTDRKVFQC…LAGFLVLKNL (206 aa)). GTP contacts are provided by residues 433 to 440 (GAKDAGKT), 470 to 474 (RVKEE), and 537 to 540 (TKVE). The helical; Anchor for type IV membrane protein transmembrane segment at 602 to 622 (NLLSKITFGAAIVALAGFLVL) threads the bilayer. At 623–625 (KNL) the chain is on the mitochondrial intermembrane side.

This sequence belongs to the mitochondrial Rho GTPase family.

The protein resides in the mitochondrion outer membrane. Its function is as follows. Mitochondrial GTPase involved in mitochondrial trafficking. Probably involved in control of anterograde transport of mitochondria and their subcellular distribution. Plays a role in maintaining mitochondrial morphology. In Caenorhabditis elegans, this protein is Mitochondrial Rho GTPase 1.